We begin with the raw amino-acid sequence, 209 residues long: UPF0502 protein PSHAa0076 (209 aa).

Belongs to the UPF0502 family.

The sequence is that of UPF0502 protein PSHAa0076 from Pseudoalteromonas translucida (strain TAC 125).